The sequence spans 124 residues: Magnetosome protein MamC (124 aa).

Residues 2 to 8 lie on the Cytoplasmic side of the membrane; the sequence is PFHLAPY. The helical transmembrane segment at 9 to 29 threads the bilayer; that stretch reads LAKSVPGVGVLGALVGGAAAL. At 30-64 the chain is on the lumenal side; the sequence is AKNVRLLKEKRITNTEAAIDTGKETVGAGLATALS. Positions 36-56 are MIC, when fused with the C-terminus of maltose-binding protein (MBP) or expressed as a fragment, improves quality of iron particles during precipitation experiments, binds magnetite; the sequence is LKEKRITNTEAAIDTGKETVG. The helical transmembrane segment at 65-85 threads the bilayer; sequence AVAATAVGGGLVVSLGTALVA. Residues 86-124 lie on the Cytoplasmic side of the membrane; it reads GVAAKYAWDRGVDLVEKELNRGKAANGASDEDILRDELA.

The protein belongs to the magnetosome MamC family. Probably interacts with MamA.

Its subcellular location is the magnetosome membrane. In terms of biological role, probably involved in magnetite crystal growth. The lumenal domain may bind the magnetite crystals, affecting crystal size and shape. The sequence is that of Magnetosome protein MamC from Paramagnetospirillum magneticum (strain ATCC 700264 / AMB-1) (Magnetospirillum magneticum).